The following is a 445-amino-acid chain: Phosphoglucosamine mutase (445 aa).

Serine 99 functions as the Phosphoserine intermediate in the catalytic mechanism. Residues serine 99, aspartate 242, aspartate 244, and aspartate 246 each coordinate Mg(2+). Serine 99 bears the Phosphoserine mark.

This sequence belongs to the phosphohexose mutase family. The cofactor is Mg(2+). Post-translationally, activated by phosphorylation.

The enzyme catalyses alpha-D-glucosamine 1-phosphate = D-glucosamine 6-phosphate. Catalyzes the conversion of glucosamine-6-phosphate to glucosamine-1-phosphate. The polypeptide is Phosphoglucosamine mutase (Helicobacter acinonychis (strain Sheeba)).